Consider the following 497-residue polypeptide: Glycerol kinase (497 aa).

ADP is bound at residue T11. Positions 11, 12, and 13 each coordinate ATP. Residue T11 participates in sn-glycerol 3-phosphate binding. R15 provides a ligand contact to ADP. Residues R81, E82, Y133, and D242 each coordinate sn-glycerol 3-phosphate. Residues R81, E82, Y133, D242, and Q243 each coordinate glycerol. ADP is bound by residues T264 and G306. T264, G306, Q310, and G407 together coordinate ATP. ADP is bound by residues G407 and N411.

The protein belongs to the FGGY kinase family.

The enzyme catalyses glycerol + ATP = sn-glycerol 3-phosphate + ADP + H(+). Its pathway is polyol metabolism; glycerol degradation via glycerol kinase pathway; sn-glycerol 3-phosphate from glycerol: step 1/1. With respect to regulation, inhibited by fructose 1,6-bisphosphate (FBP). Its function is as follows. Key enzyme in the regulation of glycerol uptake and metabolism. Catalyzes the phosphorylation of glycerol to yield sn-glycerol 3-phosphate. The polypeptide is Glycerol kinase (Alcanivorax borkumensis (strain ATCC 700651 / DSM 11573 / NCIMB 13689 / SK2)).